The following is a 1105-amino-acid chain: Integrator complex subunit 2 (1105 aa).

Residues 822–842 (FVFCSPYLLMILLRILKGSLA) traverse the membrane as a helical segment.

Belongs to the Integrator subunit 2 family. As to quaternary structure, belongs to the multiprotein complex Integrator, at least composed of IntS1, IntS2, IntS3, IntS4, omd/IntS5, IntS6, defl/IntS7, IntS8, IntS9, IntS10, IntS11, IntS12, asun/IntS13, IntS14 and IntS15. The core complex associates with protein phosphatase 2A subunits mts/PP2A and Pp2A-29B, to form the Integrator-PP2A (INTAC) complex.

The protein localises to the nucleus membrane. It is found in the nucleus. Component of the integrator complex, a multiprotein complex that terminates RNA polymerase II (Pol II) transcription in the promoter-proximal region of genes. The integrator complex provides a quality checkpoint during transcription elongation by driving premature transcription termination of transcripts that are unfavorably configured for transcriptional elongation: the complex terminates transcription by (1) catalyzing dephosphorylation of the C-terminal domain (CTD) of Pol II subunit Polr2A/Rbp1 and Spt5, and (2) degrading the exiting nascent RNA transcript via endonuclease activity. The integrator complex is also involved in the 3'-end processing of the U7 snRNA, and also the spliceosomal snRNAs U1, U2, U4 and U5. In Drosophila melanogaster (Fruit fly), this protein is Integrator complex subunit 2.